Consider the following 169-residue polypeptide: Peptide deformylase (169 aa).

Cys-92 and His-134 together coordinate Fe cation. Residue Glu-135 is part of the active site. A Fe cation-binding site is contributed by His-138.

This sequence belongs to the polypeptide deformylase family. Requires Fe(2+) as cofactor.

It catalyses the reaction N-terminal N-formyl-L-methionyl-[peptide] + H2O = N-terminal L-methionyl-[peptide] + formate. Removes the formyl group from the N-terminal Met of newly synthesized proteins. Requires at least a dipeptide for an efficient rate of reaction. N-terminal L-methionine is a prerequisite for activity but the enzyme has broad specificity at other positions. This chain is Peptide deformylase, found in Cellvibrio japonicus (strain Ueda107) (Pseudomonas fluorescens subsp. cellulosa).